Reading from the N-terminus, the 692-residue chain is Elongation factor G (692 aa).

The tr-type G domain occupies Glu-8–Leu-282. GTP is bound by residues Ala-17–Thr-24, Asp-81–His-85, and Asn-135–Asp-138.

The protein belongs to the TRAFAC class translation factor GTPase superfamily. Classic translation factor GTPase family. EF-G/EF-2 subfamily.

The protein localises to the cytoplasm. Catalyzes the GTP-dependent ribosomal translocation step during translation elongation. During this step, the ribosome changes from the pre-translocational (PRE) to the post-translocational (POST) state as the newly formed A-site-bound peptidyl-tRNA and P-site-bound deacylated tRNA move to the P and E sites, respectively. Catalyzes the coordinated movement of the two tRNA molecules, the mRNA and conformational changes in the ribosome. The sequence is that of Elongation factor G from Bacillus cereus (strain AH820).